Reading from the N-terminus, the 234-residue chain is Sugar fermentation stimulation protein homolog (234 aa).

The protein belongs to the SfsA family.

The chain is Sugar fermentation stimulation protein homolog from Shewanella sp. (strain MR-4).